Here is a 357-residue protein sequence, read N- to C-terminus: MSAFVGKYADELIKNAKYIATPGKGILAADESTGTIGKRLASINVENIEANRQALRELLFTSPNALQYLSGVILFEETLYQKSSEGKPFVEILQENNVIPGIKVDKGVVELAGTDGETTTQGFDSLGARCQQYYKAGARFAKWRAVLKIGPNEPSELSIQQNAQGLARYAIICQENGLVLFVEPEILTDGSHDIAKCAAVTETVLAACYKALNDQHVLLEGTLLKPNMVTPGSDSPKVSPEVIGEYTVNALRRTVPAAVPGIVFLSGGQSEEQATLNLNAMNKFDVVKPWTLSFSFGRALQQSTLKTWSGKKENVGKAQDVFLARCKANSEATLGKYGGGSGTGLASESLHVKDYKY.

Substrate-binding residues include arginine 52 and lysine 142. Catalysis depends on glutamate 183, which acts as the Proton acceptor. Catalysis depends on lysine 225, which acts as the Schiff-base intermediate with dihydroxyacetone-P.

The protein belongs to the class I fructose-bisphosphate aldolase family.

Its subcellular location is the cytoplasm. The enzyme catalyses beta-D-fructose 1,6-bisphosphate = D-glyceraldehyde 3-phosphate + dihydroxyacetone phosphate. It functions in the pathway carbohydrate degradation; glycolysis; D-glyceraldehyde 3-phosphate and glycerone phosphate from D-glucose: step 4/4. The chain is Fructose-bisphosphate aldolase, cytoplasmic isozyme 1 from Pisum sativum (Garden pea).